The primary structure comprises 411 residues: LL-diaminopimelate aminotransferase (411 aa).

Positions 15 and 42 each coordinate substrate. Pyridoxal 5'-phosphate is bound by residues Tyr-72, 108–109 (SK), Tyr-132, Asn-187, Tyr-218, and 246–248 (SFS). 3 residues coordinate substrate: Lys-109, Tyr-132, and Asn-187. Residue Lys-249 is modified to N6-(pyridoxal phosphate)lysine. Pyridoxal 5'-phosphate contacts are provided by Arg-257 and Asn-292. Substrate is bound by residues Asn-292 and Arg-388.

This sequence belongs to the class-I pyridoxal-phosphate-dependent aminotransferase family. LL-diaminopimelate aminotransferase subfamily. In terms of assembly, homodimer. Pyridoxal 5'-phosphate is required as a cofactor.

The enzyme catalyses (2S,6S)-2,6-diaminopimelate + 2-oxoglutarate = (S)-2,3,4,5-tetrahydrodipicolinate + L-glutamate + H2O + H(+). It functions in the pathway amino-acid biosynthesis; L-lysine biosynthesis via DAP pathway; LL-2,6-diaminopimelate from (S)-tetrahydrodipicolinate (aminotransferase route): step 1/1. Involved in the synthesis of meso-diaminopimelate (m-DAP or DL-DAP), required for both lysine and peptidoglycan biosynthesis. Catalyzes the direct conversion of tetrahydrodipicolinate to LL-diaminopimelate. The protein is LL-diaminopimelate aminotransferase of Cyanothece sp. (strain PCC 7425 / ATCC 29141).